Consider the following 153-residue polypeptide: Insulin-like growth factor 1 (153 aa).

A b region spans residues 49–77; the sequence is GPETLCGAELVDALQFVCGDRGFYFNKPT. Intrachain disulfides connect cysteine 54/cysteine 96, cysteine 66/cysteine 109, and cysteine 95/cysteine 100. Positions 78 to 89 are c; it reads GYGSSSRRAPQT. An a region spans residues 90–110; that stretch reads GIVDECCFRSCDLRRLEMYCA. The segment at 111–118 is d; sequence PLKPAKSA. A propeptide spans 119 to 153 (e peptide); the sequence is RSVRAQRHTDMPKAQKEVHLKNASRGSAGNKNYRM. A disordered region spans residues 120–153; that stretch reads SVRAQRHTDMPKAQKEVHLKNASRGSAGNKNYRM. Residues 125–138 are compositionally biased toward basic and acidic residues; the sequence is RHTDMPKAQKEVHL. The segment covering 142–153 has biased composition (polar residues); sequence SRGSAGNKNYRM.

Belongs to the insulin family. Forms a ternary complex with IGFR1 and ITGAV:ITGB3. Forms a ternary complex with IGFR1 and ITGA6:ITGB4. Forms a ternary complex with IGFBP3 and ALS.

The protein resides in the secreted. The insulin-like growth factors, isolated from plasma, are structurally and functionally related to insulin but have a much higher growth-promoting activity. May be a physiological regulator of [1-14C]-2-deoxy-D-glucose (2DG) transport and glycogen synthesis in osteoblasts. Stimulates glucose transport in bone-derived osteoblastic (PyMS) cells and is effective at much lower concentrations than insulin, not only regarding glycogen and DNA synthesis but also with regard to enhancing glucose uptake. May play a role in synapse maturation. Ca(2+)-dependent exocytosis of IGF1 is required for sensory perception of smell in the olfactory bulb. Acts as a ligand for IGF1R. Binds to the alpha subunit of IGF1R, leading to the activation of the intrinsic tyrosine kinase activity which autophosphorylates tyrosine residues in the beta subunit thus initiating a cascade of down-stream signaling events leading to activation of the PI3K-AKT/PKB and the Ras-MAPK pathways. Binds to integrins ITGAV:ITGB3 and ITGA6:ITGB4. Its binding to integrins and subsequent ternary complex formation with integrins and IGFR1 are essential for IGF1 signaling. Induces the phosphorylation and activation of IGFR1, MAPK3/ERK1, MAPK1/ERK2 and AKT1. As part of the MAPK/ERK signaling pathway, acts as a negative regulator of apoptosis in cardiomyocytes via promotion of STUB1/CHIP-mediated ubiquitination and degradation of ICER-type isoforms of CREM. The sequence is that of Insulin-like growth factor 1 from Panthera tigris altaica (Siberian tiger).